Reading from the N-terminus, the 521-residue chain is FAD-dependent monooxygenase mdpD (521 aa).

The disordered stretch occupies residues 1–48 (MTHFPVNIASDKQEFDPERWAKTPTTESSVNGENGTAPTSGLPSRHPS). Basic and acidic residues predominate over residues 11–21 (DKQEFDPERWA). Over residues 23–48 (TPTTESSVNGENGTAPTSGLPSRHPS) the composition is skewed to polar residues. Residues valine 94 and arginine 160 each contribute to the FAD site. Residues arginine 244 and tyrosine 271 contribute to the active site. Residues aspartate 369 and glycine 382 each contribute to the FAD site.

This sequence belongs to the paxM FAD-dependent monooxygenase family. The cofactor is FAD.

It participates in secondary metabolite biosynthesis. Functionally, FAD-dependent monooxygenase; part of the gene cluster that mediates the biosynthesis of monodictyphenone, a prenyl xanthone derivative. The pathway begins with the synthesis of atrochrysone thioester by the polyketide synthase (PKS) mdpG. The atrochrysone carboxyl ACP thioesterase mdpF then breaks the thioester bond and releases the atrochrysone carboxylic acid from mdpG. The atrochrysone carboxylic acid is then converted to atrochrysone which is further transformed into emodin anthrone. The next step is performed by the anthrone oxygenase mdpH that catalyzes the oxidation of emodinanthrone to emodin. Emodin is further modified to yield monodictyphenone via several steps involving mdpB, mdpC mdpJ, mdpK and mdpL. These enzymes with xptA, xptB and xptC are also proposed to be involved in the synthesis of shamixanthone from emodin. Especially, direct reduction of emodin by the short chain dehydrogenase mdpC followed by dehydration catalyzed by the scytalone dehydratase-like protein mdpB gives loss of oxygen and formation of chrysophanol intermediate in two simple steps. In Emericella nidulans (strain FGSC A4 / ATCC 38163 / CBS 112.46 / NRRL 194 / M139) (Aspergillus nidulans), this protein is FAD-dependent monooxygenase mdpD.